The primary structure comprises 1099 residues: Sterol regulatory element-binding protein 2 (1099 aa).

The segment at 1-47 (MDASEFMDTMDPSLSELGDEFTLGDIDEMLQFVSNQVDFPDIFEDQM) is transcriptional activation (acidic). At 1–461 (MDASEFMDTM…SCVGVMDRSR (461 aa)) the chain is on the cytoplasmic side. The segment at 65–107 (LTPPHTPVQTSSQTHTQTLTQAHTQTHTQTHTQTRTPPVLQPR) is disordered. Positions 71–100 (PVQTSSQTHTQTLTQAHTQTHTQTHTQTRT) are enriched in low complexity. A bHLH domain is found at 320–370 (ERRTTHNIIEKRYRSSINDKILELRDLVLGNDAKMHKSGVLRKAIDYIKYL). A leucine-zipper region spans residues 370 to 391 (LQQVNHKLRQENLTLKMANQKN). The helical transmembrane segment at 462-482 (LLLCALSFLCLSLNPLPSLLG) threads the bilayer. At 483 to 513 (AEAPAGSPEVAGHGPTRTLFSLPAQTQSFGA) the chain is on the lumenal side. Residues 514-534 (WLWCVLPFLLVWVVSGVGVVW) traverse the membrane as a helical segment. At 535–1099 (GCVRVLYLWE…LSGGTTIAAS (565 aa)) the chain is on the cytoplasmic side.

This sequence belongs to the SREBP family. As to quaternary structure, forms a tight complex with scap, the SCAP-SREBP complex, in the endoplasmic reticulum membrane. In terms of assembly, homodimer; efficient DNA binding of the soluble transcription factor fragment requires dimerization with another bHLH protein. In terms of processing, processed in the Golgi apparatus, releasing the protein from the membrane. At low cholesterol the SCAP-SREBP complex is recruited into COPII vesicles for export from the endoplasmic reticulum. In the Golgi, complex SREBPs are cleaved sequentially by site-1 (mbtps1, S1P) and site-2 (mbtps2, S2P) protease. The first cleavage by site-1 protease occurs within the luminal loop, the second cleavage by site-2 protease occurs within the first transmembrane domain, releasing the transcription factor from the Golgi membrane.

The protein resides in the endoplasmic reticulum membrane. It localises to the golgi apparatus membrane. It is found in the cytoplasmic vesicle. The protein localises to the COPII-coated vesicle membrane. Its subcellular location is the nucleus. Its function is as follows. Precursor of the transcription factor form (Processed sterol regulatory element-binding protein 2), which is embedded in the endoplasmic reticulum membrane. Low sterol concentrations promote processing of this form, releasing the transcription factor form that translocates into the nucleus and activates transcription of genes involved in cholesterol biosynthesis. Key transcription factor that regulates expression of genes involved in cholesterol biosynthesis. Binds to the sterol regulatory element 1 (SRE-1) (5'-ATCACCCCAC-3'). Has dual sequence specificity binding to both an E-box motif (5'-ATCACGTGA-3') and to SRE-1 (5'-ATCACCCCAC-3'). Regulates transcription of genes related to cholesterol synthesis pathway. Activated by mediated cholesterol efflux, transactivates NOTCH and promotes hematopoietic stem and progenitor cell emergence. In Danio rerio (Zebrafish), this protein is Sterol regulatory element-binding protein 2.